Here is a 268-residue protein sequence, read N- to C-terminus: Glutamate racemase (268 aa).

Residues 13–14 (DS) and 45–46 (YG) contribute to the substrate site. Cys-77 functions as the Proton donor/acceptor in the catalytic mechanism. 78 to 79 (NT) is a binding site for substrate. Residue Cys-185 is the Proton donor/acceptor of the active site. Substrate is bound at residue 186–187 (TH).

Belongs to the aspartate/glutamate racemases family.

The enzyme catalyses L-glutamate = D-glutamate. The protein operates within cell wall biogenesis; peptidoglycan biosynthesis. Functionally, provides the (R)-glutamate required for cell wall biosynthesis. The sequence is that of Glutamate racemase from Vibrio campbellii (strain ATCC BAA-1116).